Reading from the N-terminus, the 257-residue chain is Deoxyribose-phosphate aldolase (257 aa).

Aspartate 102 (proton donor/acceptor) is an active-site residue. Lysine 166 acts as the Schiff-base intermediate with acetaldehyde in catalysis. The active-site Proton donor/acceptor is lysine 198.

The protein belongs to the DeoC/FbaB aldolase family. DeoC type 2 subfamily.

The protein localises to the cytoplasm. It carries out the reaction 2-deoxy-D-ribose 5-phosphate = D-glyceraldehyde 3-phosphate + acetaldehyde. The protein operates within carbohydrate degradation; 2-deoxy-D-ribose 1-phosphate degradation; D-glyceraldehyde 3-phosphate and acetaldehyde from 2-deoxy-alpha-D-ribose 1-phosphate: step 2/2. In terms of biological role, catalyzes a reversible aldol reaction between acetaldehyde and D-glyceraldehyde 3-phosphate to generate 2-deoxy-D-ribose 5-phosphate. In Shewanella sediminis (strain HAW-EB3), this protein is Deoxyribose-phosphate aldolase.